Here is a 109-residue protein sequence, read N- to C-terminus: U4-lycotoxin-Ls1c (109 aa).

The first 22 residues, Met-1–Ala-22, serve as a signal peptide directing secretion. The propeptide occupies Ile-23–Arg-44. The tract at residues Ala-45–Cys-88 is knottin domain. 4 cysteine pairs are disulfide-bonded: Cys-48-Cys-63, Cys-55-Cys-72, Cys-62-Cys-88, and Cys-74-Cys-86. Residues Gln-89–Val-108 are linear cationic cytotoxin domain.

The protein belongs to the neurotoxin 19 (CSTX) family. 05 (U4-Lctx) subfamily. Expressed by the venom gland.

Its subcellular location is the secreted. Functionally, enhances the high-affinity desensitization of human P2RX3 purinoceptors. This Lycosa singoriensis (Wolf spider) protein is U4-lycotoxin-Ls1c.